The sequence spans 168 residues: Photosystem I assembly protein Ycf3 (168 aa).

TPR repeat units follow at residues Ala-35–Pro-68, Ser-72–Leu-105, and Gly-120–Asn-153.

The protein belongs to the Ycf3 family.

Its subcellular location is the plastid. It is found in the chloroplast thylakoid membrane. Essential for the assembly of the photosystem I (PSI) complex. May act as a chaperone-like factor to guide the assembly of the PSI subunits. This chain is Photosystem I assembly protein Ycf3, found in Physcomitrium patens (Spreading-leaved earth moss).